Reading from the N-terminus, the 116-residue chain is Endocuticle structural glycoprotein ABD-4 (116 aa).

Glutamine 1 carries the pyrrolidone carboxylic acid modification. Positions 20–92 constitute a Chitin-binding type R&amp;R domain; that stretch reads DGSYQWNYET…PQGAHFPTPP (73 aa). Residues 78–97 are disordered; it reads ENGFVPQGAHFPTPPPIPPA. O-linked (GalNAc) threonine; in ADB-4A, ABD-4B and ABD-4C glycosylation is present at threonine 90. Residue threonine 107 is glycosylated (O-linked (GalNAc) threonine; in ADB-4A and ABD-4B). A glycan (O-linked (GalNAc) threonine; in ADB-4A) is linked at threonine 111. Position 116 is a proline amide (proline 116).

In terms of processing, 3 variants exists that arise from a sequential glycosylation with N-acetylgalactosamine at three (ABD-4A), two (ABD-4B) or one (ABD-4C) threonine residues.

Functionally, component of the soft endocuticle of migratory locust. The chain is Endocuticle structural glycoprotein ABD-4 from Locusta migratoria (Migratory locust).